Here is a 264-residue protein sequence, read N- to C-terminus: MTNPAPSDALVIAGKHYRSRLLTGTGKFKDLDETRLATEAAAAEIVTVAIRRVNIGQDPNAPSLLDVLPPERYTLLPNTAGCYTAEDAVRTCRLARELLDGHNLTKLEVLGDEKTLYPDVVQTLKAAEQLVADGFEVMVYTSDDPILAKRLEDIGCVAVMPLAAPIGSGLGIQNKYNLLEIIENAKVPIIVDAGVGTASDAAIAMELGCDGVLMNTAIAGARDPILMASAMRKAIEAGREAFLAGRIPRKRYASASSPVDGVIG.

K106 serves as the catalytic Schiff-base intermediate with DXP. 1-deoxy-D-xylulose 5-phosphate-binding positions include G167, A193–G194, and N215–T216.

This sequence belongs to the ThiG family. As to quaternary structure, homotetramer. Forms heterodimers with either ThiH or ThiS.

It is found in the cytoplasm. The enzyme catalyses [ThiS sulfur-carrier protein]-C-terminal-Gly-aminoethanethioate + 2-iminoacetate + 1-deoxy-D-xylulose 5-phosphate = [ThiS sulfur-carrier protein]-C-terminal Gly-Gly + 2-[(2R,5Z)-2-carboxy-4-methylthiazol-5(2H)-ylidene]ethyl phosphate + 2 H2O + H(+). The protein operates within cofactor biosynthesis; thiamine diphosphate biosynthesis. Its function is as follows. Catalyzes the rearrangement of 1-deoxy-D-xylulose 5-phosphate (DXP) to produce the thiazole phosphate moiety of thiamine. Sulfur is provided by the thiocarboxylate moiety of the carrier protein ThiS. In vitro, sulfur can be provided by H(2)S. This chain is Thiazole synthase, found in Xanthomonas axonopodis pv. citri (strain 306).